Consider the following 405-residue polypeptide: Glucose-1-phosphate adenylyltransferase (405 aa).

Residues Y96, G161, 176–177 (EK), and S194 each bind alpha-D-glucose 1-phosphate.

This sequence belongs to the bacterial/plant glucose-1-phosphate adenylyltransferase family. As to quaternary structure, homotetramer.

It carries out the reaction alpha-D-glucose 1-phosphate + ATP + H(+) = ADP-alpha-D-glucose + diphosphate. Its pathway is glycan biosynthesis; glycogen biosynthesis. Functionally, involved in the biosynthesis of ADP-glucose, a building block required for the elongation reactions to produce glycogen. Catalyzes the reaction between ATP and alpha-D-glucose 1-phosphate (G1P) to produce pyrophosphate and ADP-Glc. The polypeptide is Glucose-1-phosphate adenylyltransferase (Aliivibrio fischeri (strain ATCC 700601 / ES114) (Vibrio fischeri)).